A 178-amino-acid polypeptide reads, in one-letter code: Adenine phosphoribosyltransferase (178 aa).

This sequence belongs to the purine/pyrimidine phosphoribosyltransferase family. In terms of assembly, homodimer.

The protein localises to the cytoplasm. It carries out the reaction AMP + diphosphate = 5-phospho-alpha-D-ribose 1-diphosphate + adenine. It functions in the pathway purine metabolism; AMP biosynthesis via salvage pathway; AMP from adenine: step 1/1. Functionally, catalyzes a salvage reaction resulting in the formation of AMP, that is energically less costly than de novo synthesis. The sequence is that of Adenine phosphoribosyltransferase from Bacteroides fragilis (strain ATCC 25285 / DSM 2151 / CCUG 4856 / JCM 11019 / LMG 10263 / NCTC 9343 / Onslow / VPI 2553 / EN-2).